The sequence spans 79 residues: Peptide Im-5 (79 aa).

Residues 1–23 (MKYRKQLLVLFFAYFLVVNESEA) form the signal peptide. The propeptide occupies 49–79 (RALMKRDLQDRMDPYQRNLKLDRYLKQLALD).

It belongs to the non-disulfide-bridged peptide (NDBP) superfamily. Medium-length antimicrobial peptide (group 3) family. Expressed by the venom gland.

The protein localises to the secreted. It localises to the target cell membrane. Antimicrobial peptide that may act by disrupting the integrity of the bacterial cell membrane. Has antibacterial activity against Gram-negative bacterium E.coli NBRC 3972 (MIC=10 uM) and against Gram-positive bacteria S.aureus NBRC 13276 (MIC=2.5-5 uM) and B.subtilis NBRC 3009 (MIC=0.5-1 uM). Also shows potent activity against antibiotic-sensitive and -resistant Acinetobacter baumannii (MIC=1.8-3.6 uM). Shows cytolytic activity against human and sheep erythrocytes. Toxic to cricket A.domestica. This Isometrus maculatus (Lesser brown scorpion) protein is Peptide Im-5.